Consider the following 291-residue polypeptide: Taste receptor type 2 member 16 (291 aa).

Residue M1 is a topological domain, extracellular. A helical transmembrane segment spans residues 2–22; that stretch reads IPIQLTVFFMIIYVLESLTII. The Cytoplasmic segment spans residues 23–41; that stretch reads VQSSLIVAVLGREWLQVRR. The helical transmembrane segment at 42-62 threads the bilayer; that stretch reads LMPVDMILISLGISRFCLQWA. Residues 63-84 are Extracellular-facing; that stretch reads SMLNNFCSYFNLNYVLCNLTIT. Residue N80 is glycosylated (N-linked (GlcNAc...) asparagine). The helical transmembrane segment at 85 to 105 threads the bilayer; it reads WEFFNILTFWLNSLLTVFYCI. At 106 to 125 the chain is on the cytoplasmic side; it reads KVSSFTHHIFLWLRWRILRL. A helical membrane pass occupies residues 126 to 146; it reads FPWILLGSLMITCVTIIPSAI. Topologically, residues 147–182 are extracellular; sequence GNYIQIQLLTMEHLPRNSTVTDKLENFHQYQFQAHT. A glycan (N-linked (GlcNAc...) asparagine) is linked at N163. The helical transmembrane segment at 183-203 threads the bilayer; sequence VALVIPFILFLASTIFLMASL. Over 204 to 228 the chain is Cytoplasmic; it reads TKQIQHHSTGHCNPSMKARFTALRS. A helical membrane pass occupies residues 229–249; the sequence is LAVLFIVFTSYFLTILITIIG. Residues 250–257 are Extracellular-facing; the sequence is TLFDKRCW. Residues 258 to 278 traverse the membrane as a helical segment; that stretch reads LWVWEAFVYAFILMHSTSLML. The Cytoplasmic portion of the chain corresponds to 279-291; sequence SSPTLKRILKGKC.

This sequence belongs to the G-protein coupled receptor T2R family. In terms of assembly, interacts with RTP3 and RTP4. In terms of tissue distribution, expressed in a subset of gustducin-positive taste receptor cells of the tongue. Expressed in circumvallate papillae and testis.

It is found in the cell membrane. In terms of biological role, gustducin-coupled receptor implicated in the perception of bitter compounds in the oral cavity and the gastrointestinal tract. Signals through PLCB2 and the calcium-regulated cation channel TRPM5. The chain is Taste receptor type 2 member 16 (TAS2R16) from Homo sapiens (Human).